The sequence spans 104 residues: UPF0213 protein VIBHAR_05350 (104 aa).

Residues 7–82 (QRWSVYLIRN…KQLTKTKKEL (76 aa)) form the GIY-YIG domain.

It belongs to the UPF0213 family.

The polypeptide is UPF0213 protein VIBHAR_05350 (Vibrio campbellii (strain ATCC BAA-1116)).